A 495-amino-acid polypeptide reads, in one-letter code: UDP-N-acetylmuramoyl-L-alanyl-D-glutamate--2,6-diaminopimelate ligase (495 aa).

UDP-N-acetyl-alpha-D-muramoyl-L-alanyl-D-glutamate contacts are provided by residues Leu-27, Ser-29, and 44-46 (HQA). Residue 116–122 (GTNGKTT) coordinates ATP. Residues Asn-157, 158–159 (TT), Ser-185, Gln-191, and Arg-193 each bind UDP-N-acetyl-alpha-D-muramoyl-L-alanyl-D-glutamate. Residue Lys-225 is modified to N6-carboxylysine. Meso-2,6-diaminopimelate contacts are provided by residues Arg-390, 414 to 417 (DNPR), Gly-465, and Glu-469. A Meso-diaminopimelate recognition motif motif is present at residues 414-417 (DNPR).

This sequence belongs to the MurCDEF family. MurE subfamily. It depends on Mg(2+) as a cofactor. Post-translationally, carboxylation is probably crucial for Mg(2+) binding and, consequently, for the gamma-phosphate positioning of ATP.

It localises to the cytoplasm. The enzyme catalyses UDP-N-acetyl-alpha-D-muramoyl-L-alanyl-D-glutamate + meso-2,6-diaminopimelate + ATP = UDP-N-acetyl-alpha-D-muramoyl-L-alanyl-gamma-D-glutamyl-meso-2,6-diaminopimelate + ADP + phosphate + H(+). The protein operates within cell wall biogenesis; peptidoglycan biosynthesis. Catalyzes the addition of meso-diaminopimelic acid to the nucleotide precursor UDP-N-acetylmuramoyl-L-alanyl-D-glutamate (UMAG) in the biosynthesis of bacterial cell-wall peptidoglycan. The protein is UDP-N-acetylmuramoyl-L-alanyl-D-glutamate--2,6-diaminopimelate ligase of Escherichia coli O6:H1 (strain CFT073 / ATCC 700928 / UPEC).